Consider the following 480-residue polypeptide: Adenosylhomocysteinase (480 aa).

Thr-63, Asp-142, and Glu-203 together coordinate substrate. Residue 204–206 (TTT) coordinates NAD(+). Substrate is bound by residues Lys-233 and Asp-237. Residues Asn-238, 267 to 272 (GYGDVG), Glu-290, Asn-325, 346 to 348 (IGH), and Asn-394 each bind NAD(+).

The protein belongs to the adenosylhomocysteinase family. NAD(+) serves as cofactor.

The protein localises to the cytoplasm. It carries out the reaction S-adenosyl-L-homocysteine + H2O = L-homocysteine + adenosine. It functions in the pathway amino-acid biosynthesis; L-homocysteine biosynthesis; L-homocysteine from S-adenosyl-L-homocysteine: step 1/1. Its function is as follows. May play a key role in the regulation of the intracellular concentration of adenosylhomocysteine. The protein is Adenosylhomocysteinase of Xanthomonas euvesicatoria pv. vesicatoria (strain 85-10) (Xanthomonas campestris pv. vesicatoria).